The primary structure comprises 219 residues: Nuclear transcription factor Y subunit B-8 (219 aa).

The interval 1-26 (MPDSDNDSGGPSNYAGGELSSPREQD) is disordered. A DNA-binding region spans residues 29–35 (LPIANVS). Residues 56–67 (VQECVSEFISFI) are subunit association domain (SAD). Positions 119-134 (AAASTTGAGTSAASTT) are enriched in low complexity. Disordered stretches follow at residues 119–142 (AAAS…QHTA) and 166–219 (GQPM…NRGA). Over residues 190–206 (GGRGGFGHHPGGGGGGS) the composition is skewed to gly residues.

This sequence belongs to the NFYB/HAP3 subunit family. As to quaternary structure, heterotrimeric transcription factor composed of three components, NF-YA, NF-YB and NF-YC. NF-YB and NF-YC must interact and dimerize for NF-YA association and DNA binding. Interacts with NFYC2, NFYC4 and NFYC6.

The protein resides in the cytoplasm. Functionally, component of the NF-Y/HAP transcription factor complex. The protein is Nuclear transcription factor Y subunit B-8 of Oryza sativa subsp. japonica (Rice).